We begin with the raw amino-acid sequence, 251 residues long: Proteasome subunit alpha type-4-like (251 aa).

This sequence belongs to the peptidase T1A family. The 26S proteasome consists of a 20S proteasome core and two 19S regulatory subunits. The 20S proteasome core is composed of 28 subunits that are arranged in four stacked rings, resulting in a barrel-shaped structure. The two end rings are each formed by seven alpha subunits, and the two central rings are each formed by seven beta subunits. The catalytic chamber with the active sites is on the inside of the barrel. As to expression, testis, prominent after meiosis II. After meiosis, predominantly localized to the haploid spermatid nuclei of the 64-cell cysts, remaining during the elongation and condensation of the spermatid nuclei. In mature, motile sperm, expression is seen exclusively in the sperm head.

It is found in the nucleus. In terms of biological role, the proteasome is a multicatalytic proteinase complex which is characterized by its ability to cleave peptides with Arg, Phe, Tyr, Leu, and Glu adjacent to the leaving group at neutral or slightly basic pH. The proteasome has an ATP-dependent proteolytic activity. This is Proteasome subunit alpha type-4-like (Prosalpha3T) from Drosophila melanogaster (Fruit fly).